The sequence spans 999 residues: Bifunctional glutamine synthetase adenylyltransferase/adenylyl-removing enzyme (999 aa).

The segment at 1 to 493 (MFVRKPATER…LHAKLFYQPL (493 aa)) is adenylyl removase. The tract at residues 498–999 (GHTALGIGEG…KAVVRKIFGG (502 aa)) is adenylyl transferase.

The protein belongs to the GlnE family. Requires Mg(2+) as cofactor.

The enzyme catalyses [glutamine synthetase]-O(4)-(5'-adenylyl)-L-tyrosine + phosphate = [glutamine synthetase]-L-tyrosine + ADP. The catalysed reaction is [glutamine synthetase]-L-tyrosine + ATP = [glutamine synthetase]-O(4)-(5'-adenylyl)-L-tyrosine + diphosphate. Involved in the regulation of glutamine synthetase GlnA, a key enzyme in the process to assimilate ammonia. When cellular nitrogen levels are high, the C-terminal adenylyl transferase (AT) inactivates GlnA by covalent transfer of an adenylyl group from ATP to specific tyrosine residue of GlnA, thus reducing its activity. Conversely, when nitrogen levels are low, the N-terminal adenylyl removase (AR) activates GlnA by removing the adenylyl group by phosphorolysis, increasing its activity. The regulatory region of GlnE binds the signal transduction protein PII (GlnB) which indicates the nitrogen status of the cell. The polypeptide is Bifunctional glutamine synthetase adenylyltransferase/adenylyl-removing enzyme (Mycolicibacterium smegmatis (strain ATCC 700084 / mc(2)155) (Mycobacterium smegmatis)).